A 236-amino-acid chain; its full sequence is CD81 antigen (236 aa).

The Cytoplasmic segment spans residues Met1–Tyr12. The chain crosses the membrane as a helical span at residues Leu13 to Leu33. The Extracellular portion of the chain corresponds to Trp34 to Tyr63. Residues Ile64–Ile84 form a helical membrane-spanning segment. Topologically, residues Gln85–Cys89 are cytoplasmic. A helical transmembrane segment spans residues Leu90 to Gly112. Residues Phe113–Lys201 lie on the Extracellular side of the membrane. Intrachain disulfides connect Cys156–Cys190 and Cys157–Cys175. Residues Leu202–Met224 traverse the membrane as a helical segment. Glu219 contacts cholesterol. Residues Val225–Tyr236 are Cytoplasmic-facing.

Belongs to the tetraspanin (TM4SF) family. As to quaternary structure, homodimer. Part of a complex composed of CD19, CR2/CD21, CD81 and IFITM1/CD225 in the membrane of mature B cells. Interacts (via the second extracellular domain) with CD19; this interaction is initiated early during biosynthesis in the ER and enables trafficking of only properly folded CD19. Part of a complex that includes MHC class II/HLA-DR molecules and IFITM1. Interacts with IFITM1. Interacts with IFITM2 and IFITM3. Part of integrin-tetraspanin complex composed of CD9, CD81, beta-1 and beta-2 integrins in the membrane of monocyte/macrophages. Interacts (via the second extracellular domain) with integrin ITGAV:ITGB3. Interacts with CD247/CD3 zeta, ICAM1 and CD9 at the immune synapse on T cell membrane. Part of a GPCR-tetraspanin complex consisting at least of ADGRG1, CD81, possibly CD9, and GNA11 in which CD81 enhances the association of ADGRG1 with GNA11. Part of a complex composed of CD9, CD81, PTGFRN and IGSF8. Interacts directly with IGSF8. Interacts with CD53 and SCIMP. Interacts with SAMHD1 (via its C-terminus). Interacts with glypican GPC3 and with the transcriptional repressor HHEX; binding to GPC3 decreases the availability of free CD81 for binding to HHEX, resulting in nuclear translocation of HHEX and transcriptional repression. Interacts with CLDN1. Interacts with CLDN6 and CLDN9. Not glycosylated. Post-translationally, likely constitutively palmitoylated at low levels. Protein palmitoylation is up-regulated upon coligation of BCR and CD9-C2R-CD81 complexes in lipid rafts. As to expression, expressed in oocytes (at protein level). Highly expressed in granulosa cells. Expressed in skeletal muscle mainly in endothelial cells of endomysial capillaries, in satellite cells and myoblasts (at protein level). Expressed in hepatocytes (at protein level).

Its subcellular location is the cell membrane. It localises to the basolateral cell membrane. Its function is as follows. Structural component of specialized membrane microdomains known as tetraspanin-enriched microdomains (TERMs), which act as platforms for receptor clustering and signaling. Essential for trafficking and compartmentalization of CD19 receptor on the cell surface of activated B cells. Upon initial encounter with a microbial pathogen, enables the assembly of CD19-CR2 and B cell receptor complexes at signaling TERMs, lowering the threshold dose of antigen required to trigger B cell clonal expansion and humoral immune response. In T cells, associates with CD4 or CD8 coreceptors and defines the maturation state of antigen-induced synapses with B cells. Facilitates localization of CD3 in these immune synapses, required for costimulation and sustained activation of T cells, preferentially triggering T helper type 2 immune response. Can act both as positive and negative regulator of homotypic or heterotypic cell-cell fusion processes. In myoblasts, associates with another tetraspanin CD9 in complex with PTGFRN and inhibits myotube fusion during muscle regeneration. In macrophages, associates with CD9 and beta-1 and beta-2 integrins, and prevents macrophage fusion into multinucleated giant cells specialized in ingesting complement-opsonized large particles. Also prevents the fusion between mononuclear cell progenitors into osteoclasts in charge of bone resorption. Positively regulates sperm-egg fusion and may be involved in the acrosome reaction. Regulates protein trafficking in intracellular compartments. In T cells, associates with dNTPase SAMHD1 and defines its subcellular location, enabling its degradation by the proteasome and thereby controlling intracellular dNTP levels. Also regulates integrin-dependent migration of macrophages, particularly relevant for inflammatory response in the lung. In terms of biological role, (Microbial infection) Specifically required for Plasmodium yoelii infectivity of hepatocytes, controlling sporozoite entry in hepatocytes via the parasitophorous vacuole and subsequent parasite differentiation to exoerythrocytic forms. This Mus musculus (Mouse) protein is CD81 antigen.